The sequence spans 658 residues: Glycine--tRNA ligase beta subunit (658 aa).

This sequence belongs to the class-II aminoacyl-tRNA synthetase family. Tetramer of two alpha and two beta subunits.

It is found in the cytoplasm. The catalysed reaction is tRNA(Gly) + glycine + ATP = glycyl-tRNA(Gly) + AMP + diphosphate. In Rickettsia bellii (strain OSU 85-389), this protein is Glycine--tRNA ligase beta subunit.